A 398-amino-acid polypeptide reads, in one-letter code: 1-deoxy-D-xylulose 5-phosphate reductoisomerase (398 aa).

Positions 10, 11, 12, 13, 36, 38, and 124 each coordinate NADPH. Position 125 (lysine 125) interacts with 1-deoxy-D-xylulose 5-phosphate. Glutamate 126 provides a ligand contact to NADPH. Aspartate 150 lines the Mn(2+) pocket. Positions 151, 152, 186, and 209 each coordinate 1-deoxy-D-xylulose 5-phosphate. Glutamate 152 contributes to the Mn(2+) binding site. NADPH is bound at residue glycine 215. The 1-deoxy-D-xylulose 5-phosphate site is built by serine 222, asparagine 227, lysine 228, and glutamate 231. Mn(2+) is bound at residue glutamate 231.

Belongs to the DXR family. In terms of assembly, homodimer. It depends on Mg(2+) as a cofactor. Mn(2+) is required as a cofactor.

It catalyses the reaction 2-C-methyl-D-erythritol 4-phosphate + NADP(+) = 1-deoxy-D-xylulose 5-phosphate + NADPH + H(+). It functions in the pathway isoprenoid biosynthesis; isopentenyl diphosphate biosynthesis via DXP pathway; isopentenyl diphosphate from 1-deoxy-D-xylulose 5-phosphate: step 1/6. Catalyzes the NADPH-dependent rearrangement and reduction of 1-deoxy-D-xylulose-5-phosphate (DXP) to 2-C-methyl-D-erythritol 4-phosphate (MEP). In Pectobacterium atrosepticum (strain SCRI 1043 / ATCC BAA-672) (Erwinia carotovora subsp. atroseptica), this protein is 1-deoxy-D-xylulose 5-phosphate reductoisomerase.